A 404-amino-acid polypeptide reads, in one-letter code: ATP phosphoribosyltransferase regulatory subunit (404 aa).

It belongs to the class-II aminoacyl-tRNA synthetase family. HisZ subfamily. Heteromultimer composed of HisG and HisZ subunits.

The protein localises to the cytoplasm. The protein operates within amino-acid biosynthesis; L-histidine biosynthesis; L-histidine from 5-phospho-alpha-D-ribose 1-diphosphate: step 1/9. In terms of biological role, required for the first step of histidine biosynthesis. May allow the feedback regulation of ATP phosphoribosyltransferase activity by histidine. The sequence is that of ATP phosphoribosyltransferase regulatory subunit from Picosynechococcus sp. (strain ATCC 27264 / PCC 7002 / PR-6) (Agmenellum quadruplicatum).